The primary structure comprises 611 residues: RAC serine/threonine-protein kinase (611 aa).

Residues 14–25 are compositionally biased toward low complexity; it reads VVASAPAPGSAS. Disordered regions lie at residues 14-33 and 45-88; these read VVASAPAPGSASRIPESPTT and QSTH…NTTF. Ser-30 carries the post-translational modification Phosphoserine. Positions 106 to 211 constitute a PH domain; it reads QVVKEGWLMK…WTEAIRNVSS (106 aa). A Protein kinase domain is found at 266–523; it reads FEFLKVLGKG…VKEIQAHPFF (258 aa). ATP is bound by residues 272–280 and Lys-295; that span reads LGKGTFGKV. Catalysis depends on Asp-389, which acts as the Proton acceptor. The AGC-kinase C-terminal domain occupies 524-597; sequence ASINWTDLVL…QGDMASTLGT (74 aa). A Phosphoserine modification is found at Ser-586.

This sequence belongs to the protein kinase superfamily. AGC Ser/Thr protein kinase family. RAC subfamily. As to quaternary structure, interacts with trbl. Post-translationally, phosphorylated and activated by Pk61C/PDK1. Phosphorylated on Ser-586 by the TORC2 complex. Ubiquitously expressed. Present in ovary, where it is concentrated at the basal side of follicle cells.

The protein resides in the cytoplasm. Its subcellular location is the cytosol. It is found in the cell membrane. It catalyses the reaction L-seryl-[protein] + ATP = O-phospho-L-seryl-[protein] + ADP + H(+). The enzyme catalyses L-threonyl-[protein] + ATP = O-phospho-L-threonyl-[protein] + ADP + H(+). Functionally, serine/threonine kinase involved in various developmental processes. During early embryogenesis, acts as a survival protein. During mid-embryogenesis, phosphorylates and activates trh, a transcription factor required for tracheal cell fate determination. Also regulates tracheal cell migration. Later in development, acts downstream of PI3K and Pk61C/PDK1 in the insulin receptor transduction pathway which regulates cell growth and organ size, by phosphorylating and antagonizing FOXO transcription factor. Controls follicle cell size during oogenesis. May also stimulate cell growth by phosphorylating Gig/Tsc2 and inactivating the Tsc complex. Dephosphorylation of 'Ser-586' by Phlpp triggers apoptosis and suppression of tumor growth. This is RAC serine/threonine-protein kinase from Drosophila melanogaster (Fruit fly).